The following is a 437-amino-acid chain: MDSITQLEARANEVAAAARRLAEYCRNARVDGACLPAVVPSEAPRAIREIQRLLLSNVDHLQILLTEPADLVQRLAVQSQLLSCLQWLGEFQVLACLPLTDTVSIADLARLSGVPEAQLARIIRFTITIGFLQEPQRGHVAHSPLSSLFVSRPSLRDAVMFLADSAAPTALQMASATGRFGDTVASETDTAYNIAFDHRDPFYFACEQRPKLQRRWSAYLQHTGGDARDLTQQVLSRVDWFNLNNACVVEVLGPQSQSVTMMLDQLHPMLHFIVQEARIPNGSTHAALHQDVRSVQIRELGGPQRVRDAAIYILNLGPLPHAILSTSVLTELRAHFSVLAANSCAMLILTAGLLLPKPGAVDARVETSVRLHDLSLLQLANDRLMEEDELVEMVHGVKDSVGRLAVVNRLHLPCTTTVALGVRYQAFGHGDSSAKSL.

An HTH iclR-type domain is found at 75–144 (LAVQSQLLSC…PQRGHVAHSP (70 aa)). Residues 105-124 (IADLARLSGVPEAQLARIIR) constitute a DNA-binding region (H-T-H motif).

Specifically expressed in conidia.

It localises to the nucleus. Its function is as follows. Transcriptional coactivator; part of the gene cluster that mediates the biosynthesis of trypacidin, a mycotoxin with antiprotozoal activity and that plays a role in the infection process. With tpcE, coregulates the production of trypacidin. The polypeptide is Trypacidin cluster transcriptional coactivator tpcD (Aspergillus fumigatus (strain ATCC MYA-4609 / CBS 101355 / FGSC A1100 / Af293) (Neosartorya fumigata)).